The chain runs to 217 residues: Adapter protein MecA (217 aa).

This sequence belongs to the MecA family. In terms of assembly, homodimer.

Functionally, enables the recognition and targeting of unfolded and aggregated proteins to the ClpC protease or to other proteins involved in proteolysis. This is Adapter protein MecA from Listeria monocytogenes serotype 4b (strain CLIP80459).